The primary structure comprises 608 residues: Granule-bound starch synthase 1, chloroplastic/amyloplastic (608 aa).

The N-terminal 76 residues, 1-76 (MATITASHFV…EGGMAAGTIV (76 aa)), are a transit peptide targeting the chloroplast. Lys96 serves as a coordination point for ADP-alpha-D-glucose.

It belongs to the glycosyltransferase 1 family. Bacterial/plant glycogen synthase subfamily.

It is found in the plastid. It localises to the chloroplast. The protein localises to the amyloplast. The enzyme catalyses an NDP-alpha-D-glucose + [(1-&gt;4)-alpha-D-glucosyl](n) = [(1-&gt;4)-alpha-D-glucosyl](n+1) + a ribonucleoside 5'-diphosphate + H(+). The protein operates within glycan biosynthesis; starch biosynthesis. Functionally, required for the synthesis of amylose. This Ipomoea batatas (Sweet potato) protein is Granule-bound starch synthase 1, chloroplastic/amyloplastic (WAXY).